The primary structure comprises 217 residues: ATP-binding protein BexA (217 aa).

Residues 2 to 217 (IRVNNVCKKY…AYQYYNETQK (216 aa)) form the ABC transporter domain. Position 38–45 (38–45 (GRNGAGKS)) interacts with ATP.

Belongs to the ABC transporter superfamily.

It is found in the cell inner membrane. In terms of biological role, putative ATP-binding protein, and an energy-coupling component of capsule polysaccharide export apparatus. This Haemophilus influenzae protein is ATP-binding protein BexA (bexA).